Here is a 120-residue protein sequence, read N- to C-terminus: C-C motif chemokine 23 (120 aa).

Positions 1–21 (MKVSVAALSCLMLVTALGSQA) are cleaved as a signal peptide. Cystine bridges form between Cys-54/Cys-78, Cys-55/Cys-94, and Cys-65/Cys-105.

It belongs to the intercrine beta (chemokine CC) family.

The protein resides in the secreted. In terms of biological role, shows chemotactic activity for monocytes, resting T-lymphocytes, and neutrophils, but not for activated lymphocytes. Inhibits proliferation of myeloid progenitor cells in colony formation assays. This protein can bind heparin. Binds CCR1. The polypeptide is C-C motif chemokine 23 (CCL23) (Macaca mulatta (Rhesus macaque)).